We begin with the raw amino-acid sequence, 985 residues long: Bifunctional glutamine synthetase adenylyltransferase/adenylyl-removing enzyme (985 aa).

Positions 1 to 460 (MSLPSLADFP…HFRQVIADPD (460 aa)) are adenylyl removase. Residues 476–985 (GGEWLPLWEE…MRIWAQMGLS (510 aa)) are adenylyl transferase.

Belongs to the GlnE family. It depends on Mg(2+) as a cofactor.

It carries out the reaction [glutamine synthetase]-O(4)-(5'-adenylyl)-L-tyrosine + phosphate = [glutamine synthetase]-L-tyrosine + ADP. It catalyses the reaction [glutamine synthetase]-L-tyrosine + ATP = [glutamine synthetase]-O(4)-(5'-adenylyl)-L-tyrosine + diphosphate. Its function is as follows. Involved in the regulation of glutamine synthetase GlnA, a key enzyme in the process to assimilate ammonia. When cellular nitrogen levels are high, the C-terminal adenylyl transferase (AT) inactivates GlnA by covalent transfer of an adenylyl group from ATP to specific tyrosine residue of GlnA, thus reducing its activity. Conversely, when nitrogen levels are low, the N-terminal adenylyl removase (AR) activates GlnA by removing the adenylyl group by phosphorolysis, increasing its activity. The regulatory region of GlnE binds the signal transduction protein PII (GlnB) which indicates the nitrogen status of the cell. This is Bifunctional glutamine synthetase adenylyltransferase/adenylyl-removing enzyme from Pseudomonas syringae pv. tomato (strain ATCC BAA-871 / DC3000).